A 653-amino-acid chain; its full sequence is Alpha-L-iduronidase (653 aa).

The N-terminal stretch at 1-27 (MRPLRPRAALLALLASLLAAPPVAPAE) is a signal peptide. Alpha-D-mannopyranose is bound by residues Pro-54, Leu-56, and His-58. His-91 serves as a coordination point for alpha-L-iduronate. Residue Asn-110 is glycosylated (N-linked (GlcNAc...) asparagine). Residues Asn-181 and Glu-182 each coordinate alpha-L-iduronate. Glu-182 (proton donor) is an active-site residue. The N-linked (GlcNAc...) asparagine glycan is linked to Asn-190. Lys-264, Glu-299, and Gly-305 together coordinate alpha-L-iduronate. The Nucleophile role is filled by Glu-299. Residue Trp-306 participates in alpha-D-mannopyranose binding. The N-linked (GlcNAc...) asparagine glycan is linked to Asn-336. The alpha-L-iduronate site is built by Asp-349 and Arg-363. Asn-372, Asn-415, and Asn-451 each carry an N-linked (GlcNAc...) asparagine glycan. Residues Arg-488 and Arg-492 each contribute to the alpha-D-mannopyranose site. Arg-492 contributes to the beta-D-mannose binding site. A disulfide bond links Cys-541 and Cys-577.

This sequence belongs to the glycosyl hydrolase 39 family. As to quaternary structure, monomer. N-glycosylation at Asn-372 contributes to substrate binding and is required for full enzymatic activity. Ubiquitous.

The protein resides in the lysosome. The catalysed reaction is Hydrolysis of unsulfated alpha-L-iduronosidic linkages in dermatan sulfate.. The sequence is that of Alpha-L-iduronidase (IDUA) from Homo sapiens (Human).